A 909-amino-acid chain; its full sequence is Phosphoenolpyruvate carboxylase (909 aa).

Catalysis depends on residues histidine 151 and lysine 578.

This sequence belongs to the PEPCase type 1 family. Mg(2+) serves as cofactor.

The enzyme catalyses oxaloacetate + phosphate = phosphoenolpyruvate + hydrogencarbonate. In terms of biological role, forms oxaloacetate, a four-carbon dicarboxylic acid source for the tricarboxylic acid cycle. The polypeptide is Phosphoenolpyruvate carboxylase (Caulobacter vibrioides (strain ATCC 19089 / CIP 103742 / CB 15) (Caulobacter crescentus)).